Consider the following 62-residue polypeptide: Defensin BmKDfsin6 (62 aa).

A signal peptide spans 1–24 (MKVIAILFLLAFVLCTMEITMVEA). 3 cysteine pairs are disulfide-bonded: C28–C49, C35–C57, and C39–C59.

Belongs to the invertebrate defensin family. Type 2 subfamily. In terms of tissue distribution, highly expressed in non-venom gland (hemolymph) and moderately expressed in venom gland.

It is found in the secreted. Antibacterial peptide active against Gram-positive bacteria, but not on Gram-negative bacteria. Also has weak blocking activity on Kv1.1/KCNA1, Kv1.2/KCNA2, Kv1.3/KCNA3, KCa3.1/KCNN4/IK, KCa2.3/KCNN3/SK3 and Kv11.1/KCNH2/ERG1 channels (tested at 1 uM). It inhibits potassium channel current by interacting with the pore region. This is Defensin BmKDfsin6 from Olivierus martensii (Manchurian scorpion).